We begin with the raw amino-acid sequence, 571 residues long: Carboxylesterase 3 (571 aa).

The first 26 residues, 1 to 26, serve as a signal peptide directing secretion; that stretch reads MERAVRVESGVLVGVVCLLLACPATA. Cysteines 97 and 124 form a disulfide. N-linked (GlcNAc...) asparagine glycosylation occurs at N105. S229 (acyl-ester intermediate) is an active-site residue. C281 and C292 form a disulfide bridge. Active-site charge relay system residues include E347 and H460. The Prevents secretion from ER signature appears at 568-571; the sequence is QEDL.

It belongs to the type-B carboxylesterase/lipase family. In terms of processing, N-glycosylated. Expressed in liver, colon and small intestine.

The protein resides in the endoplasmic reticulum lumen. It catalyses the reaction a carboxylic ester + H2O = an alcohol + a carboxylate + H(+). Involved in the detoxification of xenobiotics and in the activation of ester and amide prodrugs. Shows low catalytic efficiency for hydrolysis of CPT-11 (7-ethyl-10-[4-(1-piperidino)-1-piperidino]-carbonyloxycamptothecin), a prodrug for camptothecin used in cancer therapeutics. The chain is Carboxylesterase 3 (CES3) from Homo sapiens (Human).